Reading from the N-terminus, the 204-residue chain is Holliday junction branch migration complex subunit RuvA (204 aa).

Positions 1 to 64 (MIARLRGTLL…EDGQTLFGFR (64 aa)) are domain I. Positions 65-143 (TRAERDLFRR…GVGGGSTAAP (79 aa)) are domain II. A flexible linker region spans residues 144-153 (AAGADHPTGE). Positions 153-204 (ENDPVSEAIEGLVALGYKPPEAARMARNAAEPELGCEAIIRRALQRAVPRGG) are domain III.

Belongs to the RuvA family. As to quaternary structure, homotetramer. Forms an RuvA(8)-RuvB(12)-Holliday junction (HJ) complex. HJ DNA is sandwiched between 2 RuvA tetramers; dsDNA enters through RuvA and exits via RuvB. An RuvB hexamer assembles on each DNA strand where it exits the tetramer. Each RuvB hexamer is contacted by two RuvA subunits (via domain III) on 2 adjacent RuvB subunits; this complex drives branch migration. In the full resolvosome a probable DNA-RuvA(4)-RuvB(12)-RuvC(2) complex forms which resolves the HJ.

The protein resides in the cytoplasm. The RuvA-RuvB-RuvC complex processes Holliday junction (HJ) DNA during genetic recombination and DNA repair, while the RuvA-RuvB complex plays an important role in the rescue of blocked DNA replication forks via replication fork reversal (RFR). RuvA specifically binds to HJ cruciform DNA, conferring on it an open structure. The RuvB hexamer acts as an ATP-dependent pump, pulling dsDNA into and through the RuvAB complex. HJ branch migration allows RuvC to scan DNA until it finds its consensus sequence, where it cleaves and resolves the cruciform DNA. The chain is Holliday junction branch migration complex subunit RuvA from Halorhodospira halophila (strain DSM 244 / SL1) (Ectothiorhodospira halophila (strain DSM 244 / SL1)).